Here is a 181-residue protein sequence, read N- to C-terminus: ATP-dependent protease subunit HslV (181 aa).

T9 is an active-site residue. Residues G164, C167, and T170 each contribute to the Na(+) site.

Belongs to the peptidase T1B family. HslV subfamily. As to quaternary structure, a double ring-shaped homohexamer of HslV is capped on each side by a ring-shaped HslU homohexamer. The assembly of the HslU/HslV complex is dependent on binding of ATP.

The protein localises to the cytoplasm. It carries out the reaction ATP-dependent cleavage of peptide bonds with broad specificity.. Its activity is regulated as follows. Allosterically activated by HslU binding. In terms of biological role, protease subunit of a proteasome-like degradation complex believed to be a general protein degrading machinery. The polypeptide is ATP-dependent protease subunit HslV (Gemmatimonas aurantiaca (strain DSM 14586 / JCM 11422 / NBRC 100505 / T-27)).